We begin with the raw amino-acid sequence, 354 residues long: Protein RecA (354 aa).

ATP is bound at residue 68 to 75 (GPESSGKT).

This sequence belongs to the RecA family.

The protein resides in the cytoplasm. In terms of biological role, can catalyze the hydrolysis of ATP in the presence of single-stranded DNA, the ATP-dependent uptake of single-stranded DNA by duplex DNA, and the ATP-dependent hybridization of homologous single-stranded DNAs. It interacts with LexA causing its activation and leading to its autocatalytic cleavage. This chain is Protein RecA, found in Synechocystis sp. (strain ATCC 27184 / PCC 6803 / Kazusa).